Consider the following 501-residue polypeptide: UPF0371 protein CD630_08980 (501 aa).

Belongs to the UPF0371 family.

The protein is UPF0371 protein CD630_08980 of Clostridioides difficile (strain 630) (Peptoclostridium difficile).